Consider the following 163-residue polypeptide: Glutathione peroxidase 2 (163 aa).

Cysteine 36 is a catalytic residue.

It belongs to the glutathione peroxidase family.

Its subcellular location is the cytoplasm. It carries out the reaction 2 glutathione + H2O2 = glutathione disulfide + 2 H2O. May constitute a glutathione peroxidase-like protective system against oxidative stresses. The chain is Glutathione peroxidase 2 (gpx-2) from Caenorhabditis elegans.